The primary structure comprises 188 residues: Elongation factor P (188 aa).

This sequence belongs to the elongation factor P family.

It localises to the cytoplasm. The protein operates within protein biosynthesis; polypeptide chain elongation. Functionally, involved in peptide bond synthesis. Stimulates efficient translation and peptide-bond synthesis on native or reconstituted 70S ribosomes in vitro. Probably functions indirectly by altering the affinity of the ribosome for aminoacyl-tRNA, thus increasing their reactivity as acceptors for peptidyl transferase. This is Elongation factor P from Rhodopseudomonas palustris (strain TIE-1).